The sequence spans 2293 residues: MGARAVVISSLAWGLLSCCFLCSGALGSQRPLRSLPPLPSQAKPRSEPMWMPPKGAEAALAFLYSGDVQRLSGANCSEKYEVRGAEGKAGVPPVLQRAAGTLAQAANFLNMLLQANDIRESSVEEDVEWYQALVRSVAEGDPKAYRALLTFNPAPGASHLQLALQATRMGDETVLQDLSGNKVQEETPGEDLDRPVLQKRVLTNDLRSLDSPKWPRGDGYVGDIQQVKLSPPFLECHEGQLRPGWLVTVSATFYGLKPDLTPEVRGQVQMDIDLQSVDINQCASGPGWYSNTHLCDLNSTQCVPLESQGFVLGRYLCRCRPGFYGASGSGGLEESATQAAGQFGSPQDSLGKLLRCQPCPEGCTSCLDATPCLVEEALALRTAVLACQACCMLAVFLSMLVAYRCRGSKRIRASGIVLLETILFGSLLLYFPVFILYFKPSVFRCVALRWVRLLGFAVVYGTIILKLYRVLQLFLSRTAQRVPHPSSGQLLRRLGQLLLLVLGFLVVWTAGALEPGTQHTALVTRGHTPTGRHFYLCHHDHWDYIMVVAEMLLLCWGSFLCYATRAVPSAFHEPRYMSIALHNELLLSTAFHTARFVLVPSLHPDWTLLLFFLHTHSTVTATLALIFIPKFWKPGAPPREEILDEVYEDELDLQRSGSYLNSSIASAWSERSLEPGDIRDELKKLYAQLEIRKTKEMAANNPHLPKKRGSSHQGLGRSFMRYLAEFPEALARQHSRDSGSLGLGSLPGSSRRRLLSSSLQETEKPPALRKTRSTYDHHREHNTLPFDSTLRRTLSKKASPTDGRESLADGPPALGFRSASAHNLTVGERLPRARPISLQKSLSVAAGSREKALLVASQAYLEETYRQAKEREERKKAEAAMVSPVRRPSTRRLEWPLRAPLSAPPSPGKSSSMDSSQTTARPHEEAGRRLPHPPIRHQVSTPVLALSGICLGEPRMLSPTPASTLAPILLPAPAPAPAPVLAPVSKPPQSPTLLTFICPWENAELPGKKENVVQEDPAGPERSGHSPASARTKIWRALSVAVEKRGTGESEALTEGGHVQGEADDTDEEKPKVFSKSHSLKTPLQQGSVRSLGLAIKALTRSRSTYKEKDGGEGTPETEKGKPTEVSTGAPLRSPRLGRPKAVSKQVALAPCEDEESLQNQQNAHTSRMLHVCQKEGSREQEDRNKRVAPGPGERKVERTGKITMTTLRQVFGEKNAEQAKESPAGYQEVPNPALQSLGSADHRVAEVCPWEVTEPESGMDPPESVNKAKVYSWERTEGGSLEKKPSRQVLSRSWEEREKVLAESETEGVGAIPRKKPERLVRSQEAVCPWESPDSGGLSPQLVHQESDRTGGRFVVVSKGDAHPEALPSHAAKAELCLWEMSDVGEGTSTQRVQELPEERQKSPKKATFWGERNLGGDLVSLCPWESTDFRGPSAVSLQAPGSSGSLGSGIAEVCPWEAENIANDKKAEVCPWELGEELAGSDGLNPGADGKSLPGKETPSRKGCLAESGEQTVRAKPTVPQGQESVCPWEDEAPERSSPQPDKASSKAGEKLLSHGGSQVLQVCPWEAVKPEEKQATLSTAEICPWEVDGQPETRTSEHPSKGEVHKDEEKMPGRARIKAQEEAEGRIQKQEAICPWESMAPGSTPQRDTEKAQASLQRQGSVAGRAAEICPWEVGTEVGEERTIGAEASEARPNDAGHASTDSGSRQVAASAPKKSERLGSEKEVVCPWDSLSPGDSSQQPDTPNTEKLKDELQEHGSSRPIEVCPWEAEEVPTGEKAKICPWELNEGTVGKGLEREPGCEPERQRRQNLEEAGLPFQEEGTSKGDTKLCREQEGEAICPWKPPAQVPKVSDLPLSTVGQGVEGQSLEASDRASEKGELRQDLKMGSLPEYITQVVPVDGGGASSELQPISLQEGMVLAGSSSHPHIQCPDQPRVSSQPLVSTGDGTAEVCPWDAPDSDSDTKVEPCAQKVTGRVTETEMSRQDEKEKSQEEKERAPETRDHEGVAVQKMPQTSNFGKQEAVCPRESQDFGVQAATDASDGSKGGSEKVCPWEVEEVPSIKEAEICPWEASPGAVGEGALDLGQDGESQGEGRAERHLLKAAETVCPLEGTMSSGLFTQEDVVDTDLPKVGLHGASSPGKGLAELCVWEVTDPEGNKIKGTMADICPWEETRAQSDESGPLALPVTQAGVPAAPEKSVCLSVHGPLESFLPESKSVRPDISKPPGSSRPEGVREQEPLELETGAKSVPKPSPTETEAPESFTLTDDQGLMASEGEAGELSPPPDYPWDCE.

A signal peptide spans 1 to 27 (MGARAVVISSLAWGLLSCCFLCSGALG). A cache-like region region spans residues 62–245 (FLYSGDVQRL…CHEGQLRPGW (184 aa)). Residue Asn75 is glycosylated (N-linked (GlcNAc...) asparagine). Cys76 and Cys236 are oxidised to a cystine. Asn298 is a glycosylation site (N-linked (GlcNAc...) asparagine). 7 consecutive transmembrane segments (helical) span residues 383–403 (AVLACQACCMLAVFLSMLVAY), 416–436 (IVLLETILFGSLLLYFPVFIL), 445–465 (CVALRWVRLLGFAVVYGTIIL), 494–514 (LGQLLLLVLGFLVVWTAGALE), 544–564 (YIMVVAEMLLLCWGSFLCYAT), 585–602 (LLLSTAFHTARFVLVPSL), and 608–628 (LLLFFLHTHSTVTATLALIFI). Cys445 and Cys537 form a disulfide bridge. N-linked (GlcNAc...) asparagine glycosylation occurs at Asn661. The disordered stretch occupies residues 733–812 (QHSRDSGSLG…GRESLADGPP (80 aa)). The segment covering 738-759 (SGSLGLGSLPGSSRRRLLSSSL) has biased composition (low complexity). The span at 773 to 782 (STYDHHREHN) shows a compositional bias: basic and acidic residues. N-linked (GlcNAc...) asparagine glycosylation is present at Asn823. Disordered regions lie at residues 872-935 (EERK…HPPI), 1046-1235 (GTGE…NPAL), 1275-1294 (ERTEGGSLEKKPSRQVLSRS), 1326-1345 (EAVCPWESPDSGGLSPQLVH), 1388-1411 (GTSTQRVQELPEERQKSPKKATFW), 1479-1560 (ELAG…HGGS), 1578-1770 (ATLS…VCPW), 1792-1828 (TVGKGLEREPGCEPERQRRQNLEEAGLPFQEEGTSKG), 1844-1882 (WKPPAQVPKVSDLPLSTVGQGVEGQSLEASDRASEKGEL), 1924-2051 (SSSH…GSEK), and 2212-2293 (FLPE…WDCE). The segment covering 1080-1089 (LKTPLQQGSV) has biased composition (polar residues). Composition is skewed to basic and acidic residues over residues 1105-1123 (TYKEKDGGEGTPETEKGKP), 1173-1186 (CQKEGSREQEDRNK), and 1275-1286 (ERTEGGSLEKKP). 2 stretches are compositionally biased toward basic and acidic residues: residues 1546 to 1555 (ASSKAGEKLL) and 1597 to 1632 (RTSEHPSKGEVHKDEEKMPGRARIKAQEEAEGRIQK). Over residues 1644–1663 (PGSTPQRDTEKAQASLQRQG) the composition is skewed to polar residues. Basic and acidic residues-rich tracts occupy residues 1682–1698 (GEERTIGAEASEARPND) and 1717–1728 (KKSERLGSEKEV). The span at 1737–1747 (PGDSSQQPDTP) shows a compositional bias: polar residues. Composition is skewed to basic and acidic residues over residues 1748–1761 (NTEKLKDELQEHGS), 1796–1813 (GLEREPGCEPERQRRQNL), and 1872–1882 (ASDRASEKGEL). Polar residues predominate over residues 1937–1948 (RVSSQPLVSTGD). A compositionally biased stretch (basic and acidic residues) spans 1979–2007 (TETEMSRQDEKEKSQEEKERAPETRDHEG). Positions 2283–2293 (SPPPDYPWDCE) are enriched in pro residues.

It belongs to the G-protein coupled receptor 3 family. As to quaternary structure, homodimer. Associates with the R7 group RGS-GNB5 complexes, composed of an R7 group RGS subunit (RGS6, RGS7, RGS9 or RGS11) and GNB5, promoting their localization to the cell membrane and regulating the GTPase activator activity of R7 RGS proteins. Interacts with TRPM1. Interacts with GRM6. Interacts with EGFLAM; transsynaptic interaction is required for synaptic organization of photoreceptor cells.

The protein localises to the cell membrane. The protein resides in the postsynaptic cell membrane. Its subcellular location is the cell projection. It localises to the dendrite. Orphan receptor involved in vision. Required for signal transduction through retinal depolarizing bipolar cells. Acts as an atypical G-protein coupled receptor that recruits and regulates the R7 group RGS-GNB5 complexes instead of activating G proteins: promotes the GTPase activator activity of R7 RGS proteins, increasing the GTPase activity of G protein alpha subunits, thereby driving them into their inactive GDP-bound form. Associates with components of metabotropic signaling cascade in retina ON-bipolar neurons, such as TRPM1 and GRM6: may control the ability of the GRM6 cascade to gate TRPM1. The protein is G-protein coupled receptor 179 of Mus musculus (Mouse).